The primary structure comprises 269 residues: Putative esterase/lipase 1 (269 aa).

Residue His27 is part of the active site. Ser94 acts as the Charge relay system in catalysis.

This sequence belongs to the lipase/esterase LIP3/BchO family.

This chain is Putative esterase/lipase 1, found in Mycoplasma pneumoniae (strain ATCC 29342 / M129 / Subtype 1) (Mycoplasmoides pneumoniae).